Consider the following 279-residue polypeptide: Troponin T, fast skeletal muscle (279 aa).

Residues 1–21 (MSDEEVEHVEEQYEEEEEAQE) show a composition bias toward acidic residues. Residues 1–82 (MSDEEVEHVE…EKVDFDDIQK (82 aa)) form a disordered region. N-acetylserine is present on S2. Phosphoserine is present on S2. Basic and acidic residues-rich tracts occupy residues 28–49 (EVHE…ALED) and 70–82 (PEGE…DIQK). Residue S98 is modified to Phosphoserine. The segment covering 121 to 163 (RAERAEQQRIRAEKERERQNRLAEEKARREEEDAKRRAEEDLK) has biased composition (basic and acidic residues). A disordered region spans residues 121–200 (RAERAEQQRI…TAREMKKKIL (80 aa)). 3 positions are modified to phosphoserine: S169, S176, and S177. The span at 191–200 (TAREMKKKIL) shows a compositional bias: basic and acidic residues. S213 carries the phosphoserine modification. Y229 carries the post-translational modification Phosphotyrosine.

The protein belongs to the troponin T family.

In terms of biological role, troponin T is the tropomyosin-binding subunit of troponin, the thin filament regulatory complex which confers calcium-sensitivity to striated muscle actomyosin ATPase activity. The sequence is that of Troponin T, fast skeletal muscle (TNNT3) from Oryctolagus cuniculus (Rabbit).